The following is a 60-amino-acid chain: Large ribosomal subunit protein bL32 (60 aa).

The span at 1-23 (MACPKKKTSNAKRDQRRAHWRKQ) shows a compositional bias: basic residues. The interval 1–60 (MACPKKKTSNAKRDQRRAHWRKQAAREAQKALSLGKSVLSGRSNSFVYPTKEEEEGEDEE) is disordered.

This sequence belongs to the bacterial ribosomal protein bL32 family.

The chain is Large ribosomal subunit protein bL32 from Microcystis aeruginosa (strain NIES-843 / IAM M-2473).